Consider the following 461-residue polypeptide: SWM histone demethylase complex subunit phf1 (461 aa).

The disordered stretch occupies residues Pro-79–Glu-130. Over residues Pro-102 to Thr-119 the composition is skewed to polar residues. A PHD-type zinc finger spans residues Val-190–Arg-246.

In terms of assembly, component of the SWM histone demethylase complex composed of at least lsd1, lsd2, phf1 and phf2.

The protein localises to the nucleus. Component of the SWM histone demethylase complex that specifically demethylates H3K9me2, a specific tag for epigenetic transcriptional activation, thereby acting as a corepressor. Has a role in regulating heterochromatin propagation and euchromatic transcription. The sequence is that of SWM histone demethylase complex subunit phf1 (phf1) from Schizosaccharomyces pombe (strain 972 / ATCC 24843) (Fission yeast).